The chain runs to 371 residues: Cathepsin L1 (371 aa).

The first 48 residues, 1–48 (MNHLGVFETRFRPRTRHKSQRAQLIPEQITMRTAVLLPLLALLAVAQA), serve as a signal peptide directing secretion. A propeptide spans 49–153 (VSFADVVMEE…VTFISPAHVT (105 aa)) (activation peptide). N127 is a glycosylation site (N-linked (GlcNAc...) asparagine). Cystine bridges form between C175–C218, C209–C251, and C310–C360. C178 is a catalytic residue. H317 is a catalytic residue. A propeptide spanning residues 327–329 (DES) is cleaved from the precursor. Residue N338 is part of the active site.

Belongs to the peptidase C1 family. In terms of assembly, dimer of a heavy and a light chain linked by disulfide bonds. As to expression, in the embryo, predominantly expressed in the midgut. Also expressed in larval alimentary organs such as salivary gland and midgut including gastric caeca.

The protein localises to the lysosome. The enzyme catalyses Specificity close to that of papain. As compared to cathepsin B, cathepsin L exhibits higher activity toward protein substrates, but has little activity on Z-Arg-Arg-NHMec, and no peptidyl-dipeptidase activity.. Important for the overall degradation of proteins in lysosomes. Essential for adult male and female fertility. May play a role in digestion. This chain is Cathepsin L1, found in Drosophila melanogaster (Fruit fly).